A 117-amino-acid chain; its full sequence is Non-specific lipid-transfer protein B (117 aa).

A signal peptide spans 1-25; that stretch reads MAGLVKLSCLVLACMIVAGPIATNA. 4 disulfide bridges follow: Cys29–Cys76, Cys39–Cys53, Cys54–Cys99, and Cys74–Cys113.

The protein belongs to the plant LTP family.

Plant non-specific lipid-transfer proteins transfer phospholipids as well as galactolipids across membranes. May play a role in wax or cutin deposition in the cell walls of expanding epidermal cells and certain secretory tissues. This is Non-specific lipid-transfer protein B (WAX9B) from Brassica oleracea var. italica (Broccoli).